Here is a 369-residue protein sequence, read N- to C-terminus: MDTLRYYLIPVVTACGLIGFYYGGYWVWLGAATFPALMVLDVILPKDFSARKVSPFFADLTQYLQLPLMIGLYGLLVFGVENGRIELSEPLQVAGCILSLAWLSGVPTLPVSHELMHRRHWLPRKMAQLLAMFYGDPNRDIAHVNTHHLYLDTPLDSDTPYRGQTIYSFVISATVGSVKDAIKIEAETLRRKGQSPWNLSNKTYQYVALLLALPGLVSYLGGPALGLVTIASMIIAKGIVEGFNYFQHYGLVRDLDQPILLHHAWNHMGTIVRPLGCEITNHINHHIDGYTRFYELRPEKEAPQMPSLFVCFLLGLIPPLWFALIAKPKLRDWDQRYATPGERELAMAANKKAGWPLWCESELGRVASI.

Helical transmembrane passes span 8 to 28 (LIPV…YWVW), 60 to 80 (LTQY…VFGV), and 91 to 111 (LQVA…TLPV). 5 residues coordinate Fe cation: histidine 113, histidine 117, histidine 143, histidine 147, and histidine 148. A helical transmembrane segment spans residues 207–227 (VALLLALPGLVSYLGGPALGL). Residues histidine 282, histidine 285, and histidine 286 each contribute to the Fe cation site. The chain crosses the membrane as a helical span at residues 305–325 (MPSLFVCFLLGLIPPLWFALI).

The protein belongs to the fatty acid desaturase type 1 family. AlkB subfamily. As to quaternary structure, the xylene/toluene monooxygenase is composed of two subunits: the electron transfer component XylA and the hydroxylase component XylM. It depends on Fe(2+) as a cofactor.

It localises to the cell inner membrane. The catalysed reaction is m-xylene + 2 reduced [2Fe-2S]-[ferredoxin] + O2 + 2 H(+) = 3-methylbenzyl alcohol + 2 oxidized [2Fe-2S]-[ferredoxin] + H2O. It carries out the reaction p-xylene + 2 reduced [2Fe-2S]-[ferredoxin] + O2 + 2 H(+) = 4-methylbenzyl alcohol + 2 oxidized [2Fe-2S]-[ferredoxin] + H2O. The enzyme catalyses toluene + 2 reduced [2Fe-2S]-[ferredoxin] + O2 + 2 H(+) = benzyl alcohol + 2 oxidized [2Fe-2S]-[ferredoxin] + H2O. Functionally, component of a monooxygenase that catalyzes the first step in the degradation of xylenes and toluenes. XylM catalyzes the hydroxylation of the methyl side chain of xylenes and toluenes. The electrons are provided by the electron transfer component XylA. The best substrates are m-xylene and p-xylene, followed by toluene. Shows weak activity with o-xylene. In vitro, is also active with substituted compounds, such as chlorotoluenes. Cannot use benzyl alcohol. The protein is Xylene/toluene monooxygenase hydroxylase component XylM of Pseudomonas putida (Arthrobacter siderocapsulatus).